Reading from the N-terminus, the 502-residue chain is RNA-splicing ligase RtcB homolog 2 (502 aa).

Mn(2+) contacts are provided by D120, C123, H228, H260, and H354. GMP is bound at residue 227 to 231; it reads NHYAE. Residues 354-355, 403-406, S410, and 429-432 contribute to the GMP site; these read HN, GGSM, and HGAG. The GMP-histidine intermediate role is filled by H429.

It belongs to the RtcB family. Catalytic component of the tRNA-splicing ligase complex. The cofactor is Mn(2+).

It carries out the reaction a 3'-end 3'-phospho-ribonucleotide-RNA + a 5'-end dephospho-ribonucleoside-RNA + GTP = a ribonucleotidyl-ribonucleotide-RNA + GMP + diphosphate. It catalyses the reaction a 3'-end 2',3'-cyclophospho-ribonucleotide-RNA + a 5'-end dephospho-ribonucleoside-RNA + GTP + H2O = a ribonucleotidyl-ribonucleotide-RNA + GMP + diphosphate + H(+). In terms of biological role, catalytic subunit of the tRNA-splicing ligase complex that acts by directly joining spliced tRNA halves to mature-sized tRNAs by incorporating the precursor-derived splice junction phosphate into the mature tRNA as a canonical 3',5'-phosphodiester. May act as an RNA ligase with broad substrate specificity, and may function toward other RNAs. The chain is RNA-splicing ligase RtcB homolog 2 from Culex quinquefasciatus (Southern house mosquito).